We begin with the raw amino-acid sequence, 942 residues long: Isoleucine--tRNA ligase (942 aa).

The 'HIGH' region signature appears at 58–68 (PYANGDIHIGH). Glu-566 contributes to the L-isoleucyl-5'-AMP binding site. The 'KMSKS' region signature appears at 607-611 (KMSKS). Residue Lys-610 participates in ATP binding. The Zn(2+) site is built by Cys-905, Cys-908, Cys-925, and Cys-928.

The protein belongs to the class-I aminoacyl-tRNA synthetase family. IleS type 1 subfamily. In terms of assembly, monomer. Zn(2+) serves as cofactor.

It localises to the cytoplasm. It catalyses the reaction tRNA(Ile) + L-isoleucine + ATP = L-isoleucyl-tRNA(Ile) + AMP + diphosphate. Its function is as follows. Catalyzes the attachment of isoleucine to tRNA(Ile). As IleRS can inadvertently accommodate and process structurally similar amino acids such as valine, to avoid such errors it has two additional distinct tRNA(Ile)-dependent editing activities. One activity is designated as 'pretransfer' editing and involves the hydrolysis of activated Val-AMP. The other activity is designated 'posttransfer' editing and involves deacylation of mischarged Val-tRNA(Ile). The chain is Isoleucine--tRNA ligase from Vibrio parahaemolyticus serotype O3:K6 (strain RIMD 2210633).